Here is a 20-residue protein sequence, read N- to C-terminus: Pregnancy-associated glycoprotein 55h (20 aa).

Asn4 is a glycosylation site (N-linked (GlcNAc...) asparagine).

The protein belongs to the peptidase A1 family. Highly expressed in the placenta between day 60 and day 100 of gestation.

The protein resides in the secreted. Its subcellular location is the extracellular space. In Ovis aries (Sheep), this protein is Pregnancy-associated glycoprotein 55h.